The chain runs to 154 residues: SsrA-binding protein (154 aa).

Residues 134-154 are disordered; sequence ETLRRRDAKREVERALKEKNR.

This sequence belongs to the SmpB family.

Its subcellular location is the cytoplasm. In terms of biological role, required for rescue of stalled ribosomes mediated by trans-translation. Binds to transfer-messenger RNA (tmRNA), required for stable association of tmRNA with ribosomes. tmRNA and SmpB together mimic tRNA shape, replacing the anticodon stem-loop with SmpB. tmRNA is encoded by the ssrA gene; the 2 termini fold to resemble tRNA(Ala) and it encodes a 'tag peptide', a short internal open reading frame. During trans-translation Ala-aminoacylated tmRNA acts like a tRNA, entering the A-site of stalled ribosomes, displacing the stalled mRNA. The ribosome then switches to translate the ORF on the tmRNA; the nascent peptide is terminated with the 'tag peptide' encoded by the tmRNA and targeted for degradation. The ribosome is freed to recommence translation, which seems to be the essential function of trans-translation. This chain is SsrA-binding protein, found in Halalkalibacterium halodurans (strain ATCC BAA-125 / DSM 18197 / FERM 7344 / JCM 9153 / C-125) (Bacillus halodurans).